The chain runs to 269 residues: MVKISFQPAVAGIKADKADKAAASGPASASAPAAEILLTPAREERPPRHRSRKGGSVGGVCYLSMGMVVLLMGLVFASVYIYRYFFLAQLARDNFFHCGVLYEDSLSSQIRTRLELEEDVKIYLEENYERINVPVPQFGGGDPADIIHDFQRGLTAYHDISLDKCYVIELNTTIVLPPRNFWELLMNVKRGTYLPQTYIIQEEMVVTEHVRDKEALGSFIYHLCNGKDTYRLRRRSTRRRINKRGGKNCNAIRHFENTFVVETLICGVV.

Phosphothreonine is present on Thr39. The helical; Signal-anchor for type II membrane protein transmembrane segment at 57–77 (VGGVCYLSMGMVVLLMGLVFA) threads the bilayer. Residues 138 to 232 (FGGGDPADII…LCNGKDTYRL (95 aa)) form the BRICHOS domain. A disulfide bond links Cys165 and Cys224. A glycan (N-linked (GlcNAc...) asparagine) is linked at Asn171.

This sequence belongs to the ITM2 family. Interacts with BACE1. Interacts with APP. Interacts with STMN2. Type I membrane-bound, as well as soluble, furin has a pre-eminent role in ITM2C proteolytic processing. PCSK7 and PCSK5 may also be involved although to a lesser extent. The soluble form of PCSK7 is incapable of processing ITM2C. Fails to undergo shedding by ADAM10 and intramembrane cleavage by SPPL2B.

The protein localises to the lysosome membrane. The protein resides in the cell membrane. Functionally, negative regulator of amyloid-beta peptide production. May inhibit the processing of APP by blocking its access to alpha- and beta-secretase. Binding to the beta-secretase-cleaved APP C-terminal fragment is negligible, suggesting that ITM2C is a poor gamma-secretase cleavage inhibitor. May play a role in TNF-induced cell death and neuronal differentiation. The polypeptide is Integral membrane protein 2C (Itm2c) (Mus musculus (Mouse)).